We begin with the raw amino-acid sequence, 359 residues long: Mitochondrial glutathione transporter SLC25A39 (359 aa).

The Mitochondrial intermembrane portion of the chain corresponds to 1–14 (MDDQDPGGISPLQQ). Solcar repeat units lie at residues 9 to 151 (ISPL…LKAF), 159 to 243 (SDLY…VKSW), and 253 to 347 (TSVG…GKSF). The helical transmembrane segment at 15-35 (MVASGAGAVVTSLFMTPLDVV) threads the bilayer. At 36 to 121 (KVRLQSQRPS…VKIVRHEGTR (86 aa)) the chain is on the mitochondrial matrix side. C74, C78, C88, and C94 together coordinate [2Fe-2S] cluster. A helical membrane pass occupies residues 122-142 (TLWSGLPATLVMTVPATAIYF). The Mitochondrial intermembrane portion of the chain corresponds to 143-164 (TAYDQLKAFLCGQSLTSDLYAP). The helical transmembrane segment at 165–185 (MVAGALARMGTVTVVSPLELV) threads the bilayer. Over 186–214 (RTKLQAQHVSYRELASSVQAAVTQGGWRS) the chain is Mitochondrial matrix. Residues 215-235 (LWLGWGPTALRDVPFSALYWF) traverse the membrane as a helical segment. Residues 236-255 (NYELVKSWLSGLRPKDQTSV) lie on the Mitochondrial intermembrane side of the membrane. Residues 256 to 276 (GISFVAGGISGMVAATLTLPF) form a helical membrane-spanning segment. The Mitochondrial matrix segment spans residues 277–317 (DVVKTQRQMSLGAVEAVRVKPPRVDSTWLLLRRIRAESGTR). A helical transmembrane segment spans residues 318–338 (GLFAGFLPRIIKAAPSCAIMI). The Mitochondrial intermembrane segment spans residues 339-359 (STYEFGKSFFQRLNQEQPLGR).

The protein belongs to the mitochondrial carrier (TC 2.A.29) family. In terms of processing, cleaved and degraded by AFG3L2; degradation by AFG3L2 is regulated by the ability of SLC25A39 to bind iron-sulfur. In absence of mitochondrial glutathione, SLC25A39 binds iron-sulfur, preventing cleavage and degradation by AFG3L2. The presence of mitochondrial glutathione prevents iron-sulfur-binding to SLC25A39, promoting cleavage and degradation by AFG3L2. As to expression, abundant expression in bone marrow, spleen, testis and kidney.

It is found in the mitochondrion inner membrane. It catalyses the reaction glutathione(in) = glutathione(out). Its activity is regulated as follows. The activity of SLC25A39 is regulated by levels of mitochondrial glutathione via its ability to bind [2Fe-2S] iron-sulfur cluster. Upon physiological levels of mitochondrial glutathione, glutathione prevents iron-sulfur-binding to SLC25A39 promoting cleavage and degradation by AFG3L2. Upon depletion of mitochondrial glutathione, SLC25A39 binds iron-sulfur, preventing cleavage and degradation by AFG3L2. Its function is as follows. Mitochondrial transporter required for glutathione import into mitochondria. Glutathione, which plays key roles in oxidative metabolism, is produced exclusively in the cytosol and is imported in many organelles. Mitochondrial glutathione is required for the activity and stability of proteins containing iron-sulfur clusters, as well as erythropoiesis. The polypeptide is Mitochondrial glutathione transporter SLC25A39 (Mus musculus (Mouse)).